We begin with the raw amino-acid sequence, 327 residues long: Microtubule-associated protein RP/EB family member 2 (327 aa).

Residues 1–17 (MPGPTQTLSPNGENNND) are compositionally biased toward polar residues. The segment at 1 to 20 (MPGPTQTLSPNGENNNDVIH) is disordered. One can recognise a Calponin-homology (CH) domain in the interval 56 to 158 (TMSRHDIIAW…FIQWFKKFFD (103 aa)). Disordered stretches follow at residues 170–238 (EARQ…DKDL) and 295–327 (LYSS…QEEY). The region spanning 234-304 (SDKDLETQVS…LYSSEEQESH (71 aa)) is the EB1 C-terminal domain.

The protein belongs to the MAPRE family.

It localises to the cytoplasm. The protein localises to the cytoskeleton. In terms of biological role, may be involved in microtubule polymerization, and spindle function by stabilizing microtubules and anchoring them at centrosomes. This chain is Microtubule-associated protein RP/EB family member 2 (mapre2), found in Xenopus laevis (African clawed frog).